The chain runs to 151 residues: Chromophore lyase CpcS/CpeS homolog (151 aa).

This sequence belongs to the CpcS/CpeS biliprotein lyase family.

The protein localises to the plastid. It localises to the chloroplast. Might function to covalently attach a chromophore to Cys residue(s) of phycobiliproteins. This Gracilaria tenuistipitata var. liui (Red alga) protein is Chromophore lyase CpcS/CpeS homolog.